Here is a 133-residue protein sequence, read N- to C-terminus: Small ribosomal subunit protein uS8 (133 aa).

The protein belongs to the universal ribosomal protein uS8 family. As to quaternary structure, part of the 30S ribosomal subunit. Contacts proteins S5 and S12.

One of the primary rRNA binding proteins, it binds directly to 16S rRNA central domain where it helps coordinate assembly of the platform of the 30S subunit. The protein is Small ribosomal subunit protein uS8 of Prochlorococcus marinus (strain MIT 9312).